The chain runs to 456 residues: tRNA-2-methylthio-N(6)-dimethylallyladenosine synthase (456 aa).

The MTTase N-terminal domain occupies 13 to 129 (RYLYVRTFGC…IASLLEEVER (117 aa)). The [4Fe-4S] cluster site is built by Cys-22, Cys-58, Cys-92, Cys-168, Cys-172, and Cys-175. A Radical SAM core domain is found at 154-384 (GTGDVVAQVT…QSIQADITLQ (231 aa)). The 64-residue stretch at 387-450 (LAETGTVREV…SHSLKGELLS (64 aa)) folds into the TRAM domain.

This sequence belongs to the methylthiotransferase family. MiaB subfamily. In terms of assembly, monomer. The cofactor is [4Fe-4S] cluster.

The protein localises to the cytoplasm. It carries out the reaction N(6)-dimethylallyladenosine(37) in tRNA + (sulfur carrier)-SH + AH2 + 2 S-adenosyl-L-methionine = 2-methylsulfanyl-N(6)-dimethylallyladenosine(37) in tRNA + (sulfur carrier)-H + 5'-deoxyadenosine + L-methionine + A + S-adenosyl-L-homocysteine + 2 H(+). Functionally, catalyzes the methylthiolation of N6-(dimethylallyl)adenosine (i(6)A), leading to the formation of 2-methylthio-N6-(dimethylallyl)adenosine (ms(2)i(6)A) at position 37 in tRNAs that read codons beginning with uridine. This chain is tRNA-2-methylthio-N(6)-dimethylallyladenosine synthase, found in Syntrophobacter fumaroxidans (strain DSM 10017 / MPOB).